The chain runs to 203 residues: Nucleoside triphosphate pyrophosphatase (203 aa).

D78 (proton acceptor) is an active-site residue.

It belongs to the Maf family. A divalent metal cation is required as a cofactor.

It is found in the cytoplasm. It catalyses the reaction a ribonucleoside 5'-triphosphate + H2O = a ribonucleoside 5'-phosphate + diphosphate + H(+). It carries out the reaction a 2'-deoxyribonucleoside 5'-triphosphate + H2O = a 2'-deoxyribonucleoside 5'-phosphate + diphosphate + H(+). Functionally, nucleoside triphosphate pyrophosphatase. May have a dual role in cell division arrest and in preventing the incorporation of modified nucleotides into cellular nucleic acids. The sequence is that of Nucleoside triphosphate pyrophosphatase from Prochlorococcus marinus (strain AS9601).